Here is a 255-residue protein sequence, read N- to C-terminus: Uridylate kinase (255 aa).

The tract at residues 1–21 (MSAAAAGRGERLNHAGNPGHR) is disordered. 30–33 (KLGG) is a binding site for ATP. Gly71 contacts UMP. Residues Gly72 and Arg76 each coordinate ATP. UMP is bound by residues Asp91 and 152 to 159 (MGLPYFST). 2 residues coordinate ATP: Phe185 and Asp188.

Belongs to the UMP kinase family. In terms of assembly, homohexamer.

The protein resides in the cytoplasm. It carries out the reaction UMP + ATP = UDP + ADP. Its pathway is pyrimidine metabolism; CTP biosynthesis via de novo pathway; UDP from UMP (UMPK route): step 1/1. Inhibited by UTP. In terms of biological role, catalyzes the reversible phosphorylation of UMP to UDP. The protein is Uridylate kinase of Mycobacterium leprae (strain TN).